The primary structure comprises 370 residues: Peptide chain release factor 1 (370 aa).

Position 239 is an N5-methylglutamine (glutamine 239).

The protein belongs to the prokaryotic/mitochondrial release factor family. In terms of processing, methylated by PrmC. Methylation increases the termination efficiency of RF1.

The protein localises to the cytoplasm. Peptide chain release factor 1 directs the termination of translation in response to the peptide chain termination codons UAG and UAA. This chain is Peptide chain release factor 1, found in Bacteroides thetaiotaomicron (strain ATCC 29148 / DSM 2079 / JCM 5827 / CCUG 10774 / NCTC 10582 / VPI-5482 / E50).